Here is a 114-residue protein sequence, read N- to C-terminus: Large ribosomal subunit protein uL22 (114 aa).

The protein belongs to the universal ribosomal protein uL22 family. In terms of assembly, part of the 50S ribosomal subunit.

In terms of biological role, this protein binds specifically to 23S rRNA; its binding is stimulated by other ribosomal proteins, e.g. L4, L17, and L20. It is important during the early stages of 50S assembly. It makes multiple contacts with different domains of the 23S rRNA in the assembled 50S subunit and ribosome. Its function is as follows. The globular domain of the protein is located near the polypeptide exit tunnel on the outside of the subunit, while an extended beta-hairpin is found that lines the wall of the exit tunnel in the center of the 70S ribosome. The sequence is that of Large ribosomal subunit protein uL22 from Aeromonas salmonicida (strain A449).